The following is a 282-amino-acid chain: Glutamate--LysW ligase ArgX (282 aa).

ATP is bound by residues Lys-87, Lys-127, 131 to 137, and 167 to 178; these read GSWGRLV and QEYIQYKGRDIR. The 187-residue stretch at 91 to 277 folds into the ATP-grasp domain; sequence YSKLYREGIP…VAQKLVEYIK (187 aa). Arg-192 contacts substrate. Position 202 (Asn-202) interacts with ATP. 203–204 serves as a coordination point for substrate; it reads VA. The Mg(2+) site is built by Asp-237, Glu-250, and Asn-252. A substrate-binding site is contributed by 256–260; it reads EFKGF. A GF motif that is essential for ArgX substrate specificity motif is present at residues 259-260; that stretch reads GF.

This sequence belongs to the RimK family. LysX subfamily. As to quaternary structure, homotetramer. Interacts with LysW. Mg(2+) serves as cofactor.

The catalysed reaction is [amino-group carrier protein]-C-terminal-L-glutamate + L-glutamate + ATP = [amino-group carrier protein]-C-terminal-gamma-(L-glutamyl)-L-glutamate + ADP + phosphate + H(+). Its pathway is amino-acid biosynthesis; L-arginine biosynthesis. In terms of biological role, catalyzes the ATP-dependent formation of a covalent bond between the amino group of glutamate and the gamma-carboxyl group of the C-terminal glutamate residue in LysW. This chain is Glutamate--LysW ligase ArgX, found in Sulfurisphaera tokodaii (strain DSM 16993 / JCM 10545 / NBRC 100140 / 7) (Sulfolobus tokodaii).